Reading from the N-terminus, the 101-residue chain is Small ribosomal subunit protein uS14 (101 aa).

This sequence belongs to the universal ribosomal protein uS14 family. Part of the 30S ribosomal subunit. Contacts proteins S3 and S10.

In terms of biological role, binds 16S rRNA, required for the assembly of 30S particles and may also be responsible for determining the conformation of the 16S rRNA at the A site. This chain is Small ribosomal subunit protein uS14, found in Shewanella sp. (strain MR-4).